We begin with the raw amino-acid sequence, 317 residues long: Beta-ketoacyl-[acyl-carrier-protein] synthase III (317 aa).

Catalysis depends on residues Cys-112 and His-244. Positions 245–249 are ACP-binding; that stretch reads QANLR. Asn-274 is a catalytic residue.

The protein belongs to the thiolase-like superfamily. FabH family. As to quaternary structure, homodimer.

It is found in the cytoplasm. The catalysed reaction is malonyl-[ACP] + acetyl-CoA + H(+) = 3-oxobutanoyl-[ACP] + CO2 + CoA. Its pathway is lipid metabolism; fatty acid biosynthesis. Its function is as follows. Catalyzes the condensation reaction of fatty acid synthesis by the addition to an acyl acceptor of two carbons from malonyl-ACP. Catalyzes the first condensation reaction which initiates fatty acid synthesis and may therefore play a role in governing the total rate of fatty acid production. Possesses both acetoacetyl-ACP synthase and acetyl transacylase activities. Its substrate specificity determines the biosynthesis of branched-chain and/or straight-chain of fatty acids. The chain is Beta-ketoacyl-[acyl-carrier-protein] synthase III from Aliivibrio fischeri (strain ATCC 700601 / ES114) (Vibrio fischeri).